The chain runs to 703 residues: Protein FAR1-RELATED SEQUENCE 6 (703 aa).

A disordered region spans residues 1–29 (MERSESVDEDVQASAYLENDEVRERDDPM). The region spanning 99–184 (NYYNCYASEV…TLDHNHLLGC (86 aa)) is the FAR1 domain. The MULE domain maps to 297-392 (VIFIDSSYIS…SLTHIMRKIP (96 aa)). The SWIM-type zinc-finger motif lies at 584 to 620 (FEVLYNRSVGEVRCICSCFNFYGYLCRHALCVLNFNG).

Belongs to the FHY3/FAR1 family. As to expression, expressed in hypocotyls, rosette and cauline leaves, inflorescences stems, flowers and siliques.

Its subcellular location is the nucleus. Functionally, putative transcription activator involved in regulating light control of development. May have a role in controlling flowering time. In Arabidopsis thaliana (Mouse-ear cress), this protein is Protein FAR1-RELATED SEQUENCE 6 (FRS6).